A 246-amino-acid chain; its full sequence is Proteasome subunit beta type-4 (246 aa).

Residues 1 to 23 (MTTFSVPIDNGDSMKIAEEESQR) constitute a propeptide that is removed on maturation. Thr24 functions as the Nucleophile in the catalytic mechanism.

It belongs to the peptidase T1B family. As to quaternary structure, component of the 20S core complex of the 26S proteasome. The 26S proteasome is composed of a core protease (CP), known as the 20S proteasome, capped at one or both ends by the 19S regulatory particle (RP/PA700). The 20S proteasome core is composed of 28 subunits that are arranged in four stacked rings, resulting in a barrel-shaped structure. The two end rings are each formed by seven alpha subunits, and the two central rings are each formed by seven beta subunits. The catalytic chamber with the active sites is on the inside of the barrel. In terms of tissue distribution, ubiquitous low levels, higher expression in siliques and flowers.

It is found in the cytoplasm. The protein resides in the nucleus. Non-catalytic component of the proteasome, a multicatalytic proteinase complex which is characterized by its ability to cleave peptides with Arg, Phe, Tyr, Leu, and Glu adjacent to the leaving group at neutral or slightly basic pH. The proteasome has an ATP-dependent proteolytic activity. The polypeptide is Proteasome subunit beta type-4 (PBG1) (Arabidopsis thaliana (Mouse-ear cress)).